A 391-amino-acid chain; its full sequence is MYITDNETKKALLIFTDIFSGPASNSHISRSTLQEKSAKALKEIEEKELKSLVETIFLKPLSSLRFRIAKENPATLVGSGQLEKIAQAIEEEGADLVVFNSAVSPRIQRNLEAALNTCVIDRSEVIIQIFADRAQTREAVLQAELARLEYSMPRLTRRWTSLAQQRGGAKGTRGASRGAGEKKLELDRRRLKTEITKLKKEVERVRLQRSEQRKTRLNGDKKIGAIVGYTNAGKSSLLKKLSGAEVFTEDKLFATLDAETRKVFLQTGEKNIQILLTDTVGFVSNLPHQLIDAFRSTLEEAALADFLIIVCDAAHPAMPECLEVTKKVLDELSCSDKPSIIAINKMDDIFDEAQLLNLKERYPEAVEISVTTGQGLEGLKKKITDIIIFDK.

The disordered stretch occupies residues Leu162 to Glu181. Residues Lys222 to Lys391 form the Hflx-type G domain. GTP-binding positions include Gly228–Ser235, Phe253–Asp257, Asp278–Gly281, Asn344–Asp347, and Ser369–Thr371. Mg(2+) contacts are provided by Ser235 and Thr255.

The protein belongs to the TRAFAC class OBG-HflX-like GTPase superfamily. HflX GTPase family. As to quaternary structure, monomer. Associates with the 50S ribosomal subunit. The cofactor is Mg(2+).

It is found in the cytoplasm. Its function is as follows. GTPase that associates with the 50S ribosomal subunit and may have a role during protein synthesis or ribosome biogenesis. The protein is GTPase HflX of Treponema denticola (strain ATCC 35405 / DSM 14222 / CIP 103919 / JCM 8153 / KCTC 15104).